The primary structure comprises 1296 residues: DNA-directed RNA polymerase subunit beta' (1296 aa).

Zn(2+) contacts are provided by Cys-60, Cys-62, Cys-75, and Cys-78. Residues Asp-535, Asp-537, and Asp-539 each contribute to the Mg(2+) site. Zn(2+) contacts are provided by Cys-877, Cys-954, Cys-961, and Cys-964.

Belongs to the RNA polymerase beta' chain family. As to quaternary structure, the RNAP catalytic core consists of 2 alpha, 1 beta, 1 beta' and 1 omega subunit. When a sigma factor is associated with the core the holoenzyme is formed, which can initiate transcription. Mg(2+) serves as cofactor. Requires Zn(2+) as cofactor.

It catalyses the reaction RNA(n) + a ribonucleoside 5'-triphosphate = RNA(n+1) + diphosphate. Its function is as follows. DNA-dependent RNA polymerase catalyzes the transcription of DNA into RNA using the four ribonucleoside triphosphates as substrates. The sequence is that of DNA-directed RNA polymerase subunit beta' from Beutenbergia cavernae (strain ATCC BAA-8 / DSM 12333 / CCUG 43141 / JCM 11478 / NBRC 16432 / NCIMB 13614 / HKI 0122).